The chain runs to 434 residues: Protein TolB homolog (434 aa).

The signal sequence occupies residues 1–27 (MRSTRNSFACLCIMLFGMLFVPFTLRA). Residues 413 to 434 (SNQRPLLNMQGEQQQPSWSVSK) form a disordered region.

This sequence belongs to the TolB family.

It is found in the periplasm. The sequence is that of Protein TolB homolog from Chlorobaculum tepidum (strain ATCC 49652 / DSM 12025 / NBRC 103806 / TLS) (Chlorobium tepidum).